Here is a 494-residue protein sequence, read N- to C-terminus: Serine carboxypeptidase-like 21 (494 aa).

The first 23 residues, Met1–Ser23, serve as a signal peptide directing secretion. N-linked (GlcNAc...) asparagine glycosylation is found at Asn37 and Asn69. Cystine bridges form between Cys85-Cys383, Cys247-Cys263, and Cys286-Cys350. Ser179 is an active-site residue. Residues Asn198 and Asn248 are each glycosylated (N-linked (GlcNAc...) asparagine). Asn402 carries N-linked (GlcNAc...) asparagine glycosylation. Asp418 is an active-site residue. Asn460 is a glycosylation site (N-linked (GlcNAc...) asparagine). His471 is a catalytic residue.

The protein belongs to the peptidase S10 family. As to expression, expressed in flowers and siliques.

The protein localises to the secreted. In terms of biological role, probable carboxypeptidase. This is Serine carboxypeptidase-like 21 (SCPL21) from Arabidopsis thaliana (Mouse-ear cress).